Here is a 180-residue protein sequence, read N- to C-terminus: Putative phycocyanobilin lyase CpcS 2 (180 aa).

Belongs to the CpcS/CpeS biliprotein lyase family.

Covalently attaches a chromophore to Cys residue(s) of phycobiliproteins (Potential). In vitro does not act as a chromophore lyase for ApcA1, ApcA2, ApcB, ApcD, ApcF, CpcB or PecB, the lyase activity is therefore unsure. The protein is Putative phycocyanobilin lyase CpcS 2 (cpeS2) of Nostoc sp. (strain PCC 7120 / SAG 25.82 / UTEX 2576).